We begin with the raw amino-acid sequence, 736 residues long: Phosphoribosylformylglycinamidine synthase subunit PurL (736 aa).

His-49 is an active-site residue. ATP-binding residues include Tyr-52 and Lys-91. Residue Glu-93 participates in Mg(2+) binding. Residues 94 to 97 (SHNH) and Arg-116 each bind substrate. The active-site Proton acceptor is His-95. Position 117 (Asp-117) interacts with Mg(2+). Gln-240 is a substrate binding site. Asp-268 serves as a coordination point for Mg(2+). 312 to 314 (ESQ) contacts substrate. ATP is bound by residues Asp-493 and Gly-530. Asn-531 provides a ligand contact to Mg(2+). Ser-533 serves as a coordination point for substrate.

It belongs to the FGAMS family. Monomer. Part of the FGAM synthase complex composed of 1 PurL, 1 PurQ and 2 PurS subunits.

The protein localises to the cytoplasm. The catalysed reaction is N(2)-formyl-N(1)-(5-phospho-beta-D-ribosyl)glycinamide + L-glutamine + ATP + H2O = 2-formamido-N(1)-(5-O-phospho-beta-D-ribosyl)acetamidine + L-glutamate + ADP + phosphate + H(+). Its pathway is purine metabolism; IMP biosynthesis via de novo pathway; 5-amino-1-(5-phospho-D-ribosyl)imidazole from N(2)-formyl-N(1)-(5-phospho-D-ribosyl)glycinamide: step 1/2. Part of the phosphoribosylformylglycinamidine synthase complex involved in the purines biosynthetic pathway. Catalyzes the ATP-dependent conversion of formylglycinamide ribonucleotide (FGAR) and glutamine to yield formylglycinamidine ribonucleotide (FGAM) and glutamate. The FGAM synthase complex is composed of three subunits. PurQ produces an ammonia molecule by converting glutamine to glutamate. PurL transfers the ammonia molecule to FGAR to form FGAM in an ATP-dependent manner. PurS interacts with PurQ and PurL and is thought to assist in the transfer of the ammonia molecule from PurQ to PurL. The sequence is that of Phosphoribosylformylglycinamidine synthase subunit PurL from Rhodopseudomonas palustris (strain BisB5).